A 134-amino-acid polypeptide reads, in one-letter code: Mini-ribonuclease 3 (134 aa).

Aspartate 22 is an active-site residue.

Belongs to the MrnC RNase family. In terms of assembly, homodimer. Mg(2+) serves as cofactor.

It is found in the cytoplasm. In terms of biological role, involved in correct processing of both the 5' and 3' ends of 23S rRNA precursor. Processes 30S rRNA precursor transcript even in absence of ribonuclease 3 (Rnc); Rnc processes 30S rRNA into smaller rRNA precursors. This chain is Mini-ribonuclease 3, found in Staphylococcus aureus (strain NCTC 8325 / PS 47).